A 332-amino-acid polypeptide reads, in one-letter code: uncharacterized protein (332 aa).

An N-terminal signal peptide occupies residues 1–23; the sequence is MKRIPSLIIGLLLILATWHSVLA. A helical transmembrane segment spans residues 231–251; that stretch reads SFFLGMIVTLIILAPVILYLW.

The protein resides in the membrane. This is an uncharacterized protein from Pyrococcus horikoshii (strain ATCC 700860 / DSM 12428 / JCM 9974 / NBRC 100139 / OT-3).